A 129-amino-acid polypeptide reads, in one-letter code: MYTAAIDALPPVGDAEFPERAAVVLSGLRKLQGSLAEAASRSRATPSVIVALSGVRTRYDELMTTAAEGPGATLGQRLYVARLRAKLTTAEAANGIGVRKDLIEAVEAEEPATEAETAQIKDLIAALGG.

K121 participates in a covalent cross-link: Isoglutamyl lysine isopeptide (Lys-Gln) (interchain with Q-Cter in protein Pup).

This is an uncharacterized protein from Mycolicibacterium smegmatis (strain ATCC 700084 / mc(2)155) (Mycobacterium smegmatis).